Consider the following 284-residue polypeptide: Fructosamine kinase FrlD (284 aa).

This sequence belongs to the carbohydrate kinase PfkB family.

Catalyzes the phosphorylation of a range of fructosamines to fructosamine 6-phosphates. The chain is Fructosamine kinase FrlD (frlD) from Bacillus subtilis (strain 168).